Reading from the N-terminus, the 260-residue chain is Nuclear receptor subfamily 0 group B member 2 (260 aa).

An NR LBD domain is found at Ser-16–Arg-260. Arg-57 carries the symmetric dimethylarginine; by PRMT5 modification.

The protein belongs to the nuclear hormone receptor family. NR0 subfamily. Heterodimer; efficient DNA binding requires dimerization with another bHLH protein. Interacts (via N-terminus) with NEUROD1 (via N-terminus and C-terminus). Interacts with ID2. Interacts with NR1I3 and EID1. Interacts with RARA, RXRA, THRB, NR5A1, NR5A2, PPARA and PPARG. Interacts with RORG, NFIL3, NR1D1 and BHLHE41. Interacts with HNF4A; the resulting heterodimer is transcriptionally inactive. Interacts with DDX3X; this interaction disrupts the interaction between HNF4 and NR0B2/SHP that forms inactive heterodimers and enhances the formation of active HNF4 homodimers. Arginine methylation by PRMT5 enhances repression activity of metabolic genes in liver in response to bile acid signaling, by increasing interaction with cofactors. In terms of tissue distribution, detected in kidney, testis, heart and liver.

It localises to the cytoplasm. The protein localises to the nucleus. In terms of biological role, transcriptional regulator that acts as a negative regulator of receptor-dependent signaling pathways. Specifically inhibits transactivation of the nuclear receptor with which it interacts. Inhibits transcriptional activity of NEUROD1 on E-box-containing promoter by interfering with the coactivation function of the p300/CBP-mediated transcription complex for NEUROD1. Essential component of the liver circadian clock which via its interaction with NR1D1 and RORG regulates NPAS2-mediated hepatic lipid metabolism. Regulates the circadian expression of cytochrome P450 (CYP) enzymes. Represses: NR5A2 and HNF4A to down-regulate CYP2C38, NFLI3 to up-regulate CYP2A5, BHLHE41/HNF1A axis to up-regulate CYP1A2, CYP2E1 and CYP3A11, and NR1D1 to up-regulate CYP2B10, CYP4A10 and CYP4A14. The chain is Nuclear receptor subfamily 0 group B member 2 (Nr0b2) from Rattus norvegicus (Rat).